The chain runs to 379 residues: Glucose-1-phosphate adenylyltransferase (379 aa).

Residues Y99, G164, 179-180 (EK), and S190 contribute to the alpha-D-glucose 1-phosphate site.

The protein belongs to the bacterial/plant glucose-1-phosphate adenylyltransferase family. In terms of assembly, homotetramer.

The catalysed reaction is alpha-D-glucose 1-phosphate + ATP + H(+) = ADP-alpha-D-glucose + diphosphate. It participates in glycan biosynthesis; glycogen biosynthesis. Involved in the biosynthesis of ADP-glucose, a building block required for the elongation reactions to produce glycogen. Catalyzes the reaction between ATP and alpha-D-glucose 1-phosphate (G1P) to produce pyrophosphate and ADP-Glc. The sequence is that of Glucose-1-phosphate adenylyltransferase from Bacillus licheniformis (strain ATCC 14580 / DSM 13 / JCM 2505 / CCUG 7422 / NBRC 12200 / NCIMB 9375 / NCTC 10341 / NRRL NRS-1264 / Gibson 46).